We begin with the raw amino-acid sequence, 24 residues long: Calreticulin (24 aa).

This sequence belongs to the calreticulin family. In terms of assembly, monomer. Component of an EIF2 complex at least composed of CELF1/CUGBP1, CALR, CALR3, EIF2S1, EIF2S2, HSP90B1 and HSPA5. Interacts with PDIA3/ERp57 and SPACA9. Interacts with TRIM21. Interacts with NR3C1. Interacts with PPIB. Interacts (via P-domain) with PDIA5. Interacts with CLCC1. In terms of tissue distribution, pancreas.

The protein resides in the endoplasmic reticulum lumen. The protein localises to the cytoplasm. It is found in the cytosol. It localises to the cytolytic granule. Its subcellular location is the secreted. The protein resides in the extracellular space. The protein localises to the extracellular matrix. It is found in the cell surface. It localises to the sarcoplasmic reticulum lumen. Its subcellular location is the cytoplasmic vesicle. The protein resides in the secretory vesicle. The protein localises to the cortical granule. Calcium-binding chaperone that promotes folding, oligomeric assembly and quality control in the endoplasmic reticulum (ER) via the calreticulin/calnexin cycle. This lectin interacts transiently with almost all of the monoglucosylated glycoproteins that are synthesized in the ER. Interacts with the DNA-binding domain of NR3C1 and mediates its nuclear export. Involved in maternal gene expression regulation. May participate in oocyte maturation via the regulation of calcium homeostasis. Present in the cortical granules of non-activated oocytes, is exocytosed during the cortical reaction in response to oocyte activation and might participate in the block to polyspermy. The polypeptide is Calreticulin (CALR) (Canis lupus familiaris (Dog)).